Reading from the N-terminus, the 533-residue chain is Purine-cytosine permease FCY2 (533 aa).

Topologically, residues 1-98 (MLEEGNNVYE…NAASMWFSAN (98 aa)) are cytoplasmic. Residue lysine 16 forms a Glycyl lysine isopeptide (Lys-Gly) (interchain with G-Cter in ubiquitin) linkage. A Phosphoserine modification is found at serine 18. A helical transmembrane segment spans residues 99 to 119 (MVIASYALGALGPMVFGLNFG). Topologically, residues 120–121 (QS) are extracellular. Residues 122–141 (VLVIIFFNIMGLIFVAFFSV) traverse the membrane as a helical segment. At 142-198 (FGAELGLRQMILSRYLVGNVTARIFSLINVIACVGWGIVNTSVSAQLLNMVNEGSGH) the chain is on the cytoplasmic side. Residues 165-184 (IFSLINVIACVGWGIVNTSV) are surface seeking. The helical transmembrane segment at 199–218 (VCPIWAGCLIIIGGTVLVTF) threads the bilayer. At 219-256 (FGYSVIHAYEKWSWVPNFAVFLVIIAQLSRSGKFKGGE) the chain is on the extracellular side. A helical transmembrane segment spans residues 257–276 (WVGGATTAGSVLSFGSSIFG). Residues 277-300 (FAAGWTTYAADYTVYMPKSTNKYK) lie on the Cytoplasmic side of the membrane. Residues 301-320 (IFFSLVAGLAFPLFFTMILG) form a helical membrane-spanning segment. The Extracellular segment spans residues 321 to 347 (AASAMAALNDPTWKAYYDKNAMGGVIY). A helical transmembrane segment spans residues 348–367 (AILVPNSLNGFGQFCCVLLA). At 368-398 (LSTIANNIPNMYTVALSAQALWAPLAKIPRV) the chain is on the cytoplasmic side. The chain crosses the membrane as a helical span at residues 399–418 (VWTMAGNAATLGISIPATYY). Residues 419-465 (FDGFMENFMDSIGYYLAIYIAISCSEHFFYRRSFSAYNIDDWDNWEH) are Extracellular-facing. The helical transmembrane segment at 466-485 (LPIGIAGTAALIVGAFGVAL) threads the bilayer. Residues 486-533 (GMCQTYWVGEIGRLIGKYGGDIGFELGASWAFIIYNILRPLELKYFGR) are Cytoplasmic-facing.

The protein belongs to the purine-cytosine permease (2.A.39) family. Post-translationally, not N-glycosylated.

The protein localises to the membrane. Functionally, this permease has a broad specificity towards purines, and also transport cytosine and 5-methylcytosine but neither uracil nor thymine. This chain is Purine-cytosine permease FCY2 (FCY2), found in Saccharomyces cerevisiae (strain ATCC 204508 / S288c) (Baker's yeast).